We begin with the raw amino-acid sequence, 106 residues long: Transcription initiation factor IIA subunit 2 (106 aa).

The protein belongs to the TFIIA subunit 2 family. TFIIA is a heterodimer of the large unprocessed subunit 1 and a small subunit gamma. It was originally believed to be a heterotrimer of an alpha, a beta and a gamma subunit.

Its subcellular location is the nucleus. TFIIA is a component of the transcription machinery of RNA polymerase II and plays an important role in transcriptional activation. TFIIA in a complex with TBP mediates transcriptional activity. This is Transcription initiation factor IIA subunit 2 (TFIIA-S) from Arabidopsis thaliana (Mouse-ear cress).